The primary structure comprises 916 residues: Dual serine/threonine and tyrosine protein kinase (916 aa).

A compositionally biased stretch (basic and acidic residues) spans 1 to 19; the sequence is MQRDGTRSARRMDEGDRRT. Residues 1–27 are disordered; that stretch reads MQRDGTRSARRMDEGDRRTGSAGRSGS. The region spanning 641-895 is the Protein kinase domain; the sequence is PRIGRELGRG…PLMGIVQPML (255 aa). ATP is bound by residues 647–655 and K670; that span reads LGRGQYGVV. Residue D766 is the Proton acceptor of the active site.

It belongs to the protein kinase superfamily. Ser/Thr protein kinase family.

Its subcellular location is the cytoplasm. It is found in the cell membrane. It localises to the apical cell membrane. The protein resides in the basolateral cell membrane. The protein localises to the cell junction. The enzyme catalyses L-seryl-[protein] + ATP = O-phospho-L-seryl-[protein] + ADP + H(+). It catalyses the reaction L-threonyl-[protein] + ATP = O-phospho-L-threonyl-[protein] + ADP + H(+). It carries out the reaction L-tyrosyl-[protein] + ATP = O-phospho-L-tyrosyl-[protein] + ADP + H(+). May act as a positive regulator of ERK phosphorylation downstream of fibroblast growth factor-receptor activation. May induce both caspase-dependent apoptosis and caspase-independent cell death. May play a role in the embryonic development. The protein is Dual serine/threonine and tyrosine protein kinase (dstyk) of Xenopus laevis (African clawed frog).